Reading from the N-terminus, the 256-residue chain is Enolase-phosphatase E1 (256 aa).

Positions 14 and 16 each coordinate Mg(2+). Substrate-binding positions include Ser-142–Ser-143 and Lys-176. Asp-201 is a Mg(2+) binding site.

Belongs to the HAD-like hydrolase superfamily. MasA/MtnC family. In terms of assembly, monomer. Mg(2+) is required as a cofactor.

It is found in the cytoplasm. Its subcellular location is the nucleus. It catalyses the reaction 5-methylsulfanyl-2,3-dioxopentyl phosphate + H2O = 1,2-dihydroxy-5-(methylsulfanyl)pent-1-en-3-one + phosphate. Its pathway is amino-acid biosynthesis; L-methionine biosynthesis via salvage pathway; L-methionine from S-methyl-5-thio-alpha-D-ribose 1-phosphate: step 3/6. It functions in the pathway amino-acid biosynthesis; L-methionine biosynthesis via salvage pathway; L-methionine from S-methyl-5-thio-alpha-D-ribose 1-phosphate: step 4/6. In terms of biological role, bifunctional enzyme that catalyzes the enolization of 2,3-diketo-5-methylthiopentyl-1-phosphate (DK-MTP-1-P) into the intermediate 2-hydroxy-3-keto-5-methylthiopentenyl-1-phosphate (HK-MTPenyl-1-P), which is then dephosphorylated to form the acireductone 1,2-dihydroxy-3-keto-5-methylthiopentene (DHK-MTPene). The protein is Enolase-phosphatase E1 of Drosophila melanogaster (Fruit fly).